The chain runs to 158 residues: Small ribosomal subunit protein uS9 (158 aa).

This sequence belongs to the universal ribosomal protein uS9 family.

The protein is Small ribosomal subunit protein uS9 of Rhodopseudomonas palustris (strain HaA2).